We begin with the raw amino-acid sequence, 360 residues long: NAD(P)H-quinone oxidoreductase subunit 1, chloroplastic (360 aa).

8 helical membrane-spanning segments follow: residues 30–50 (FLPIFSLVLGILTGVLVLVWL), 98–118 (FSIGPSIAVISILLSYSVIPF), 127–147 (FNIGIFLWIAISSIAPIGLLM), 165–185 (AAQSISYEIPLTLCLLSISLL), 203–223 (FWGWNLWRQPIGFIIFLISSL), 248–268 (YSGIKFGLFYVASYLNLLISS), 297–317 (IFGTTIGIFITLAKTYLFLFI), and 340–360 (FLLPISLGNLLLTTSFQVFSL).

This sequence belongs to the complex I subunit 1 family. In terms of assembly, NDH is composed of at least 16 different subunits, 5 of which are encoded in the nucleus.

It is found in the plastid. It localises to the chloroplast thylakoid membrane. The enzyme catalyses a plastoquinone + NADH + (n+1) H(+)(in) = a plastoquinol + NAD(+) + n H(+)(out). It carries out the reaction a plastoquinone + NADPH + (n+1) H(+)(in) = a plastoquinol + NADP(+) + n H(+)(out). NDH shuttles electrons from NAD(P)H:plastoquinone, via FMN and iron-sulfur (Fe-S) centers, to quinones in the photosynthetic chain and possibly in a chloroplast respiratory chain. The immediate electron acceptor for the enzyme in this species is believed to be plastoquinone. Couples the redox reaction to proton translocation, and thus conserves the redox energy in a proton gradient. This chain is NAD(P)H-quinone oxidoreductase subunit 1, chloroplastic, found in Aethionema grandiflorum (Persian stone-cress).